Consider the following 196-residue polypeptide: Large ribosomal subunit protein uL5 (196 aa).

This sequence belongs to the universal ribosomal protein uL5 family. Part of the 50S ribosomal subunit; part of the 5S rRNA/L5/L18/L25 subcomplex. Contacts the 5S rRNA and the P site tRNA. Forms a bridge to the 30S subunit in the 70S ribosome.

In terms of biological role, this is one of the proteins that bind and probably mediate the attachment of the 5S RNA into the large ribosomal subunit, where it forms part of the central protuberance. In the 70S ribosome it contacts protein S13 of the 30S subunit (bridge B1b), connecting the 2 subunits; this bridge is implicated in subunit movement. Contacts the P site tRNA; the 5S rRNA and some of its associated proteins might help stabilize positioning of ribosome-bound tRNAs. This is Large ribosomal subunit protein uL5 from Acidothermus cellulolyticus (strain ATCC 43068 / DSM 8971 / 11B).